The following is a 354-amino-acid chain: MLYFLYKILNINILNYITVRAGIAFFAAFFLTAFFMPRFIAWAKNKHANQPIYELAPQSHKAKNKTPTMGGIVFITATLLSSLLCSNLTNTFVIGGILCLFGFSFIGFKDDYGKIAGHSNHAGMSPRKKFMYQIGLSFALSIILFLFANLSGEFFIPFYKYALFNLQFFAIFFWMLVITASSNSVNLTDGLDGLASIPSIFALVSLGIFVYLCGHSVFSAYLFLPKVVGVGELCVVIFALIGAILGFLWYNCYPAQVFMGDSGSLSVGAFIGYTGVVSKNEILLIIIGFVFVIETLSVILQVGSFKIRKKRIFLMAPIHHHFELKGWNENKIIVRFWIIALIANIIALTTLKLR.

A run of 10 helical transmembrane segments spans residues 23-43 (IAFFAAFFLTAFFMPRFIAWA), 66-86 (TPTMGGIVFITATLLSSLLCS), 88-108 (LTNTFVIGGILCLFGFSFIGF), 138-158 (FALSIILFLFANLSGEFFIPF), 161-181 (YALFNLQFFAIFFWMLVITAS), 193-213 (GLASIPSIFALVSLGIFVYLC), 227-247 (VVGVGELCVVIFALIGAILGF), 257-277 (VFMGDSGSLSVGAFIGYTGVV), 282-302 (ILLIIIGFVFVIETLSVILQV), and 331-351 (KIIVRFWIIALIANIIALTTL).

It belongs to the glycosyltransferase 4 family. MraY subfamily. Mg(2+) is required as a cofactor.

The protein resides in the cell inner membrane. It catalyses the reaction UDP-N-acetyl-alpha-D-muramoyl-L-alanyl-gamma-D-glutamyl-meso-2,6-diaminopimeloyl-D-alanyl-D-alanine + di-trans,octa-cis-undecaprenyl phosphate = di-trans,octa-cis-undecaprenyl diphospho-N-acetyl-alpha-D-muramoyl-L-alanyl-D-glutamyl-meso-2,6-diaminopimeloyl-D-alanyl-D-alanine + UMP. It participates in cell wall biogenesis; peptidoglycan biosynthesis. Functionally, catalyzes the initial step of the lipid cycle reactions in the biosynthesis of the cell wall peptidoglycan: transfers peptidoglycan precursor phospho-MurNAc-pentapeptide from UDP-MurNAc-pentapeptide onto the lipid carrier undecaprenyl phosphate, yielding undecaprenyl-pyrophosphoryl-MurNAc-pentapeptide, known as lipid I. This is Phospho-N-acetylmuramoyl-pentapeptide-transferase from Campylobacter hominis (strain ATCC BAA-381 / DSM 21671 / CCUG 45161 / LMG 19568 / NCTC 13146 / CH001A).